Consider the following 1407-residue polypeptide: MAGKSNKSKAKRAAQSTTTNSTTDVKSDAPAPPVAATVPATAPVTAAAAPVATAAAPVTAPDNGTLTAVDSAVPEANEVAPTIPKADESESQVENNDAQPKQGELRLYPVSVKTQSGGKMELQLNPGDSVMDIRQFLLDAPETCYFTCYELLLRNKDGETHHLEDYNEISEVADITIGGCSLEMVAALYDDRSIRAHVHRARDLLSLSTLHSSLSTTLALQYDAALNKVQNPGDKPKSDVPELECLGFMEDVPGSLKKLINSTSEEIRSVENIVFSSFNPPPSHRRLVGDLIYLDVVTLEGNKYCITGTTKTFYVNSSSGNILDPRPSKSGFEAATLIGLLQKLSSKFKKAFREVMEKKASAHPFENVQSLLPPHSWLRTYPVPDHKRDAARAEEALTISYGSELIGMQRDWNEELQSCREFPHTSPQERILRDRALYKVSSDFVDAALNGAIGVISRCIPPINPTDPECLHMYVHNNIFFSFAVDADIEQLSKKRPSNQMTEKVSSSEKVSCTEGTCDNEEHNNCNEAPLVENEQATYASANNDLKGTKLYQEADVPGLYNLAMAIIDYRGHRVVAQSVLPGILQGDKSDALLYGSVDNGKKICWNEDFHAKVLEAAKLLHIKEHSVIDASETVFKLAAPVECKGIVGSDNRHYLLDLMRVTPRDANYTGPESRFCVLRPELITSFCQAESLEKSKFKTKADEGGDDSSNVSADTSKVGDALIDGEANGASNSDQKSISDKQNTTAEDYAAGSSESSKSCDQIAFNPNVFTDFTLGGNQEEIAADEENVKKVSSYLVDVVLPKFIEDLCTLEVSPMDGQTLTEALHAHGVNVRYIGRVANGVKHLPHLWDLCLNEITVRSAKHILKDILRDIEDHDIGSAVSHFLNCFFGNYQTAGGKASANSSTAKNQKKFFGADQPITKKGQGRGKGKASSKKSFSSYMMVDSNILWSDIQEFAKAKYEFELPELSRTTAKKVSVLRNLCQKVGVSIAARKYDFSANTPFETSDILDLRPVIKHSVPVCSEAKDLVEMGKVQLAEGMLSESYTFFSEAFSILQQVTGPMHREVANCCRYLAMVLYHAGDMAGAIMQQHKELIINERCLGLDHPDTAHSYGNMALFYHGLNQTELALQNMGRALLLLGLSSGPDHPDVAATFINVAMMYQDMGKMDTALRYLQEALKKNERLLGPEHIQTAVCYHALAIAFNCMGAFKLSHQHEKKTYDILVKQLGDDDSRTRDSLNWMKTFKMRELQMTAQKQKGQAANAANTQKAIDLLKAHPDLIHAFQNAAATGRTNALNSAVLGETQPRGRGFDERAARAAAEVRKKAAAKGLLVRPQGGVPVQAMPPLSQLQNMINTATVSSEKGGENGEAKVQEKKESSENGKTENLAPAGLGAGLTSLDKKKQKAKK.

The span at methionine 1–arginine 12 shows a compositional bias: basic residues. Disordered stretches follow at residues methionine 1–alanine 36 and isoleucine 83–glycine 103. Over residues alanine 14–aspartate 24 the composition is skewed to polar residues. The Clu domain maps to proline 384–threonine 670. The segment at isoleucine 724–serine 760 is disordered. Residues glycine 730 to alanine 747 show a composition bias toward polar residues. TPR repeat units follow at residues alanine 1025–valine 1058, alanine 1067–cysteine 1100, alanine 1109–serine 1142, alanine 1151–leucine 1184, and alanine 1193–glutamine 1226. Residues valine 1358–lysine 1407 form a disordered region. The span at lysine 1362 to lysine 1382 shows a compositional bias: basic and acidic residues.

It belongs to the CLU family.

The protein localises to the cytoplasm. In terms of biological role, mRNA-binding protein involved in proper cytoplasmic distribution of mitochondria. Together with REC2, REC3 and FMT/CLU, contributes to the establishment of the cellular volume devoted to the chloroplast compartment. This chain is Clustered mitochondria protein, found in Arabidopsis thaliana (Mouse-ear cress).